The sequence spans 268 residues: 4-hydroxy-tetrahydrodipicolinate reductase (268 aa).

9–14 (GCSGRM) contacts NAD(+). Arg36 is a binding site for NADP(+). Residues 98-100 (GTT) and 122-125 (APNT) contribute to the NAD(+) site. The active-site Proton donor/acceptor is the His155. (S)-2,3,4,5-tetrahydrodipicolinate is bound at residue His156. Lys159 (proton donor) is an active-site residue. Position 165–166 (165–166 (GT)) interacts with (S)-2,3,4,5-tetrahydrodipicolinate.

It belongs to the DapB family.

Its subcellular location is the cytoplasm. It carries out the reaction (S)-2,3,4,5-tetrahydrodipicolinate + NAD(+) + H2O = (2S,4S)-4-hydroxy-2,3,4,5-tetrahydrodipicolinate + NADH + H(+). The catalysed reaction is (S)-2,3,4,5-tetrahydrodipicolinate + NADP(+) + H2O = (2S,4S)-4-hydroxy-2,3,4,5-tetrahydrodipicolinate + NADPH + H(+). The protein operates within amino-acid biosynthesis; L-lysine biosynthesis via DAP pathway; (S)-tetrahydrodipicolinate from L-aspartate: step 4/4. Catalyzes the conversion of 4-hydroxy-tetrahydrodipicolinate (HTPA) to tetrahydrodipicolinate. The polypeptide is 4-hydroxy-tetrahydrodipicolinate reductase (Colwellia psychrerythraea (strain 34H / ATCC BAA-681) (Vibrio psychroerythus)).